The primary structure comprises 380 residues: 8-amino-7-oxononanoate synthase (380 aa).

Residue Arg-26 participates in substrate binding. 104-105 (GY) contributes to the pyridoxal 5'-phosphate binding site. Position 129 (His-129) interacts with substrate. Pyridoxal 5'-phosphate-binding positions include Ser-175, 200–203 (DEAH), and 232–235 (TLSK). Residue Lys-235 is modified to N6-(pyridoxal phosphate)lysine. Thr-345 is a binding site for substrate.

It belongs to the class-II pyridoxal-phosphate-dependent aminotransferase family. BioF subfamily. As to quaternary structure, homodimer. Pyridoxal 5'-phosphate serves as cofactor.

It carries out the reaction 6-carboxyhexanoyl-[ACP] + L-alanine + H(+) = (8S)-8-amino-7-oxononanoate + holo-[ACP] + CO2. It participates in cofactor biosynthesis; biotin biosynthesis. Its function is as follows. Catalyzes the decarboxylative condensation of pimeloyl-[acyl-carrier protein] and L-alanine to produce 8-amino-7-oxononanoate (AON), [acyl-carrier protein], and carbon dioxide. This chain is 8-amino-7-oxononanoate synthase, found in Mycolicibacterium gilvum (strain PYR-GCK) (Mycobacterium gilvum (strain PYR-GCK)).